Here is a 364-residue protein sequence, read N- to C-terminus: GDP-fucose transporter 1 (364 aa).

A run of 8 helical transmembrane segments spans residues 34–56 (FLLR…ISMV), 76–98 (VTFY…AACC), 111–130 (LRVA…MITF), 140–162 (VAFY…YLLL), 167–185 (SFYA…WLGV), 195–214 (SWLG…LNAI), 227–249 (IWRL…LLLL), and 264–286 (AHFW…VTGL).

It belongs to the TPT transporter family. SLC35C subfamily.

It is found in the golgi apparatus membrane. It carries out the reaction GMP(out) + GDP-beta-L-fucose(in) = GMP(in) + GDP-beta-L-fucose(out). Its function is as follows. Antiporter specific for GDP-l-fucose and depending on the concomitant reverse transport of GMP. Involved in GDP-fucose import from the cytoplasm into the Golgi lumen. This chain is GDP-fucose transporter 1, found in Homo sapiens (Human).